The chain runs to 459 residues: MQVSVETLEGLERKVTVSVPTEKVEEEVSSRLRNLARKVKIDGFRPGKVPFNVVKSRFSDSVREEVAREMVQSTLYEALQKNELVPAGYPHVEPLEIEPGKDFKYTAVFEVMPVFEIVELNQAPVELIQSEVTDKDVDNMIEKLREQNKEWHEVTHAVKKGDKVVIDFQGFLDDKPFQGGSAEGYELVIGSGSMIPGFEDGIVGGKIDKPFDIKVSFPEDYGHKDLAGKEATFKITIKKIMEGKLPALDEAFAEKFNIKEGGIESLKKDIRENMARELERRVNMMNREKLFDSLMSVNHVELPIALIDKEIEHLKHDMYHRLFGHEHKDDEKIPDFPRELFEEQAKRRVHLGLLFAEYVKKHEIVADNDKVNAMIDKFASAYESPDELRAWYQSSKEHMAEVEALVMEDMVADKIAEDAKLKYKNMDYDSVMNPKKGTEKKGELACQAIQIILSVMQAD.

The region spanning 161-246 (GDKVVIDFQG…IKKIMEGKLP (86 aa)) is the PPIase FKBP-type domain.

The protein belongs to the FKBP-type PPIase family. Tig subfamily.

The protein resides in the cytoplasm. The enzyme catalyses [protein]-peptidylproline (omega=180) = [protein]-peptidylproline (omega=0). In terms of biological role, involved in protein export. Acts as a chaperone by maintaining the newly synthesized protein in an open conformation. Functions as a peptidyl-prolyl cis-trans isomerase. This chain is Trigger factor, found in Legionella pneumophila (strain Corby).